We begin with the raw amino-acid sequence, 120 residues long: Large ribosomal subunit protein bL19 (120 aa).

The protein belongs to the bacterial ribosomal protein bL19 family.

In terms of biological role, this protein is located at the 30S-50S ribosomal subunit interface and may play a role in the structure and function of the aminoacyl-tRNA binding site. In Kocuria rhizophila (strain ATCC 9341 / DSM 348 / NBRC 103217 / DC2201), this protein is Large ribosomal subunit protein bL19.